The following is a 55-amino-acid chain: Large ribosomal subunit protein bL33 (55 aa).

This sequence belongs to the bacterial ribosomal protein bL33 family.

This Methylobacterium radiotolerans (strain ATCC 27329 / DSM 1819 / JCM 2831 / NBRC 15690 / NCIMB 10815 / 0-1) protein is Large ribosomal subunit protein bL33.